The sequence spans 254 residues: Nickel import ATP-binding protein NikD (254 aa).

Residues 2–241 form the ABC transporter domain; the sequence is PQQIELRNIA…PKHAVTRSLV (240 aa). 36–43 lines the ATP pocket; the sequence is GGSGSGKS.

Belongs to the ABC transporter superfamily. Nickel importer (TC 3.A.1.5.3) family. In terms of assembly, the complex is composed of two ATP-binding proteins (NikD and NikE), two transmembrane proteins (NikB and NikC) and a solute-binding protein (NikA).

Its subcellular location is the cell inner membrane. The enzyme catalyses Ni(2+)(out) + ATP + H2O = Ni(2+)(in) + ADP + phosphate + H(+). In terms of biological role, part of the ABC transporter complex NikABCDE involved in nickel import. Responsible for energy coupling to the transport system. The sequence is that of Nickel import ATP-binding protein NikD from Shigella sonnei (strain Ss046).